The following is a 502-amino-acid chain: MKIAVIGAGVTGLAAAARIASQGHEVTIFEKNTNVGGRMNQLKKDGFTFDMGPTIVMMPDVYKDVFTMCGKNYEDYIELRQLRYIYDVYFDRDDRITVPTDLAELQHMLESIEPGSTHGFMSFLTDVYKKYEIARRYFLERTYRKPSDFYNMTSLVQGAKLKTLNHADQLIEHYIDNEKIQKLLAFQTLYIGIDPKRGPSLYSIIPMIEMMFGVHFIKGGMYGMAQGLAQLNKDLGVNIELNAEIEQIIIDPKFKRADAIKVNGDIRKFDKILCTADFPSVAESLMPDFAPIKKYPPHKIADLDYSCSAFLMYIGIDIDVTDQVRLHNVIFSDDFRGNIEEIFEGRLSYDPSIYVYVPAVADKSLAPEGKTGIYVLMPTPELKTGSGIDWSDEALTQQIKEIIYRKLATIEVFEDIKSHIVSETIFTPNDFEQTYHAKFGSAFGLMPTLAQSNYYRPQNVSRDYKDLYFAGASTHPGAGVPIVLTSAKITVDEMVKDIEQGV.

Valine 5–alanine 17 contributes to the FAD binding site.

This sequence belongs to the carotenoid/retinoid oxidoreductase family. CrtN subfamily.

It catalyses the reaction 15-cis-4,4'-diapophytoene + 3 FAD + 3 H(+) = all-trans-4,4'-diaponeurosporene + 3 FADH2. It functions in the pathway carotenoid biosynthesis; staphyloxanthin biosynthesis; staphyloxanthin from farnesyl diphosphate: step 2/5. In terms of biological role, involved in the biosynthesis of the yellow-orange carotenoid staphyloxanthin, which plays a role in the virulence via its protective function against oxidative stress. Catalyzes three successive dehydrogenation reactions that lead to the introduction of three double bonds into 4,4'-diapophytoene (dehydrosqualene), with 4,4'-diapophytofluene and 4,4'-diapo-zeta-carotene as intermediates, and 4,4'-diaponeurosporene (the major deep-yellow pigment in staphylococci strains) as the end product. The chain is 4,4'-diapophytoene desaturase (4,4'-diaponeurosporene-forming) from Staphylococcus aureus (strain bovine RF122 / ET3-1).